Reading from the N-terminus, the 334-residue chain is Acryloyl-coenzyme A reductase (334 aa).

Position 38 (Cys38) interacts with Zn(2+). Tyr39 contacts NADP(+). The Zn(2+) site is built by His60, Asp90, Cys93, Cys96, Cys104, and Cys146. Residues 173 to 176 (SGGV) and 195 to 197 (TTS) contribute to the NADP(+) site.

It belongs to the zinc-containing alcohol dehydrogenase family. Monomer. Requires Zn(2+) as cofactor.

The catalysed reaction is propanoyl-CoA + NADP(+) = acryloyl-CoA + NADPH + H(+). Functionally, plays a role in autotrophic carbon fixation via the 3-hydroxypropionate/4-hydroxybutyrate cycle. Catalyzes the acryloyl-CoA dependent NADPH oxidation and formation of propionyl-CoA. Inactive towards 3-hydroxypropionyl-CoA, NADH and crotonyl-CoA. In Sulfurisphaera tokodaii (strain DSM 16993 / JCM 10545 / NBRC 100140 / 7) (Sulfolobus tokodaii), this protein is Acryloyl-coenzyme A reductase.